Reading from the N-terminus, the 191-residue chain is Small ribosomal subunit protein uS7 (191 aa).

The tract at residues 56–80 (NKSGEQGDGDGESGGKAGGIKKRSL) is disordered.

The protein belongs to the universal ribosomal protein uS7 family. Part of the 30S ribosomal subunit. Contacts proteins S9 and S11.

Its function is as follows. One of the primary rRNA binding proteins, it binds directly to 16S rRNA where it nucleates assembly of the head domain of the 30S subunit. Is located at the subunit interface close to the decoding center, probably blocks exit of the E-site tRNA. The polypeptide is Small ribosomal subunit protein uS7 (Coxiella burnetii (strain CbuK_Q154) (Coxiella burnetii (strain Q154))).